The primary structure comprises 129 residues: Modulator protein MzrA (129 aa).

At 1–14 the chain is on the cytoplasmic side; sequence MINFRGRFGRPLWH. A helical membrane pass occupies residues 15-35; that stretch reads YLVLPVVLLLLAVILLTPMIV. The Periplasmic portion of the chain corresponds to 36-129; sequence QTESTLKIRP…VFRSNQQNLG (94 aa).

It belongs to the MzrA family. In terms of assembly, interacts with EnvZ.

It is found in the cell inner membrane. Its function is as follows. Modulates the activity of the EnvZ/OmpR two-component regulatory system, probably by directly modulating EnvZ enzymatic activity and increasing stability of phosphorylated OmpR. The protein is Modulator protein MzrA of Yersinia pestis (strain Pestoides F).